Consider the following 123-residue polypeptide: Histone H2B (123 aa).

The segment at 1–32 (MPPKAASKGAKKAASKAKAARSTDKKKRRRRR) is disordered. Residues 9 to 32 (GAKKAASKAKAARSTDKKKRRRRR) show a composition bias toward basic residues. O-linked (GlcNAc) serine glycosylation is present at S110. A Glycyl lysine isopeptide (Lys-Gly) (interchain with G-Cter in ubiquitin) cross-link involves residue K118.

This sequence belongs to the histone H2B family. In terms of assembly, the nucleosome is a histone octamer containing two molecules each of H2A, H2B, H3 and H4 assembled in one H3-H4 heterotetramer and two H2A-H2B heterodimers. The octamer wraps approximately 147 bp of DNA. Monoubiquitination of Lys-118 gives a specific tag for epigenetic transcriptional activation and is also prerequisite for histone H3 'Lys-4' and 'Lys-79' methylation.

The protein resides in the nucleus. The protein localises to the chromosome. In terms of biological role, core component of nucleosome. Nucleosomes wrap and compact DNA into chromatin, limiting DNA accessibility to the cellular machineries which require DNA as a template. Histones thereby play a central role in transcription regulation, DNA repair, DNA replication and chromosomal stability. DNA accessibility is regulated via a complex set of post-translational modifications of histones, also called histone code, and nucleosome remodeling. The sequence is that of Histone H2B from Urechis caupo (Innkeeper worm).